A 34-amino-acid polypeptide reads, in one-letter code: Toxin Ptu1 (34 aa).

3 disulfide bridges follow: C5–C20, C12–C26, and C19–C33.

It is found in the secreted. Its function is as follows. Binds reversibly and blocks N-type voltage-gated calcium channels (Cav). The protein is Toxin Ptu1 of Peirates turpis (Assassin bug).